The primary structure comprises 298 residues: GTPase Era (298 aa).

An Era-type G domain is found at 8 to 176 (RSGSVAVIGR…VSDLLKLVPE (169 aa)). Residues 16 to 23 (GRPNVGKS) form a G1 region. 16 to 23 (GRPNVGKS) contacts GTP. A G2 region spans residues 42–46 (QTTRH). Residues 63-66 (DTPG) are G3. GTP is bound by residues 63–67 (DTPGL) and 125–128 (NKVD). The tract at residues 125-128 (NKVD) is G4. The G5 stretch occupies residues 155–157 (VSA). The KH type-2 domain maps to 199–283 (VREQLMRQLG…FLETWVRVRE (85 aa)).

The protein belongs to the TRAFAC class TrmE-Era-EngA-EngB-Septin-like GTPase superfamily. Era GTPase family. As to quaternary structure, monomer.

It is found in the cytoplasm. The protein resides in the cell inner membrane. Its function is as follows. An essential GTPase that binds both GDP and GTP, with rapid nucleotide exchange. Plays a role in 16S rRNA processing and 30S ribosomal subunit biogenesis and possibly also in cell cycle regulation and energy metabolism. This chain is GTPase Era, found in Xanthomonas campestris pv. campestris (strain 8004).